The primary structure comprises 353 residues: Rhodopsin (353 aa).

Topologically, residues 1 to 36 (MNGTEGPFFYVPMVNTTGIVRSPYEYPQYYLVNPAA) are extracellular. Residues asparagine 2 and asparagine 15 are each glycosylated (N-linked (GlcNAc...) asparagine). A helical membrane pass occupies residues 37–61 (YAALGAYMFLLILVGFPINFLTLYV). The Cytoplasmic portion of the chain corresponds to 62-73 (TIEHKKLRTPLN). The chain crosses the membrane as a helical span at residues 74-96 (YILLNLAVADLFMVLGGFTTTMY). Topologically, residues 97-110 (TSMHGYFVLGRLGC) are extracellular. Cysteines 110 and 187 form a disulfide. The chain crosses the membrane as a helical span at residues 111–133 (NIEGFFATLGGEIALWSLVVLAI). The 'Ionic lock' involved in activated form stabilization motif lies at 134 to 136 (ERW). Residues 134-152 (ERWVVVCKPISNFRFGENH) are Cytoplasmic-facing. The helical transmembrane segment at 153-173 (AIMGLAFTWTMAMACAAPPLV) threads the bilayer. At 174–202 (GWSRYIPEGMQCSCGIDYYTRAEGFNNES) the chain is on the extracellular side. N-linked (GlcNAc...) asparagine glycosylation is present at asparagine 200. A helical transmembrane segment spans residues 203-224 (FVIYMFICHFTIPLTVVFFCYG). The Cytoplasmic portion of the chain corresponds to 225-252 (RLLCAVKEAAAAQQESETTQRAEKEVTR). A helical transmembrane segment spans residues 253–274 (MVIMMVIAFLVCWLPYASVAWY). Topologically, residues 275-286 (IFTHQGSEFGPV) are extracellular. A helical membrane pass occupies residues 287 to 308 (FMTIPAFFAKSSSIYNPMIYIC). At lysine 296 the chain carries N6-(retinylidene)lysine. Topologically, residues 309 to 353 (LNKQFRHCMITTLCCGKNPFEEEEGASTASKTEASSVSSSSVSPA) are cytoplasmic. Residues cysteine 322 and cysteine 323 are each lipidated (S-palmitoyl cysteine). The tract at residues 331–353 (EEGASTASKTEASSVSSSSVSPA) is disordered. Residues 334–353 (ASTASKTEASSVSSSSVSPA) are compositionally biased toward low complexity.

It belongs to the G-protein coupled receptor 1 family. Opsin subfamily. Post-translationally, phosphorylated on some or all of the serine and threonine residues present in the C-terminal region. Contains one covalently linked retinal chromophore.

The protein resides in the membrane. The protein localises to the cell projection. It localises to the cilium. It is found in the photoreceptor outer segment. Its function is as follows. Photoreceptor required for image-forming vision at low light intensity. While most salt water fish species use retinal as chromophore, most freshwater fish use 3-dehydroretinal, or a mixture of retinal and 3-dehydroretinal. Light-induced isomerization of 11-cis to all-trans retinal triggers a conformational change that activates signaling via G-proteins. Subsequent receptor phosphorylation mediates displacement of the bound G-protein alpha subunit by arrestin and terminates signaling. The polypeptide is Rhodopsin (rho) (Diplodus annularis (Annular seabream)).